The sequence spans 220 residues: Small ribosomal subunit protein eS8 (220 aa).

Disordered stretches follow at residues methionine 1–asparagine 41 and alanine 131–asparagine 151. The segment covering methionine 8 to lysine 26 has biased composition (basic residues).

It belongs to the eukaryotic ribosomal protein eS8 family.

This is Small ribosomal subunit protein eS8 (RPS8) from Oryza sativa subsp. japonica (Rice).